A 564-amino-acid polypeptide reads, in one-letter code: 2-succinyl-5-enolpyruvyl-6-hydroxy-3-cyclohexene-1-carboxylate synthase (564 aa).

It belongs to the TPP enzyme family. MenD subfamily. Homodimer. Mg(2+) is required as a cofactor. It depends on Mn(2+) as a cofactor. Requires thiamine diphosphate as cofactor.

It catalyses the reaction isochorismate + 2-oxoglutarate + H(+) = 5-enolpyruvoyl-6-hydroxy-2-succinyl-cyclohex-3-ene-1-carboxylate + CO2. It functions in the pathway quinol/quinone metabolism; 1,4-dihydroxy-2-naphthoate biosynthesis; 1,4-dihydroxy-2-naphthoate from chorismate: step 2/7. The protein operates within quinol/quinone metabolism; menaquinone biosynthesis. Its function is as follows. Catalyzes the thiamine diphosphate-dependent decarboxylation of 2-oxoglutarate and the subsequent addition of the resulting succinic semialdehyde-thiamine pyrophosphate anion to isochorismate to yield 2-succinyl-5-enolpyruvyl-6-hydroxy-3-cyclohexene-1-carboxylate (SEPHCHC). The chain is 2-succinyl-5-enolpyruvyl-6-hydroxy-3-cyclohexene-1-carboxylate synthase from Photorhabdus laumondii subsp. laumondii (strain DSM 15139 / CIP 105565 / TT01) (Photorhabdus luminescens subsp. laumondii).